Reading from the N-terminus, the 146-residue chain is UPF0260 protein Sama_1927 (146 aa).

The protein belongs to the UPF0260 family.

The sequence is that of UPF0260 protein Sama_1927 from Shewanella amazonensis (strain ATCC BAA-1098 / SB2B).